Reading from the N-terminus, the 631-residue chain is E3 ubiquitin-protein ligase Zswim2 (631 aa).

The SWIM-type zinc-finger motif lies at F54–F87. The segment at K139–L348 is UBE2D1-binding. The RING-type 1 zinc finger occupies C147 to R199. The ZZ-type zinc-finger motif lies at H230–Q281. Positions 235, 238, 250, 253, 259, 262, 268, and 271 each coordinate Zn(2+). An RING-type 2 zinc finger spans residues C344 to R386. The tract at residues S589 to P614 is disordered. The segment covering V599–R608 has biased composition (basic residues).

As to quaternary structure, dimer. Interacts with UBE2D1. Post-translationally, polyubiquitinated. Polyubiquitination is followed by degradation via the proteasome. Expressed only in testis.

It carries out the reaction S-ubiquitinyl-[E2 ubiquitin-conjugating enzyme]-L-cysteine + [acceptor protein]-L-lysine = [E2 ubiquitin-conjugating enzyme]-L-cysteine + N(6)-ubiquitinyl-[acceptor protein]-L-lysine.. E3 ubiquitin-protein ligase involved in the regulation of Fas-, DR3- and DR4-mediated apoptosis. Functions in conjunction with the UBE2D1, UBE2D3 and UBE2E1 E2 ubiquitin-conjugating enzymes. The protein is E3 ubiquitin-protein ligase Zswim2 (Zswim2) of Mus musculus (Mouse).